Consider the following 295-residue polypeptide: Pyridoxal 5'-phosphate synthase subunit PdxS (295 aa).

Position 25 (Asp25) interacts with D-ribose 5-phosphate. Lys82 (schiff-base intermediate with D-ribose 5-phosphate) is an active-site residue. Position 154 (Gly154) interacts with D-ribose 5-phosphate. A D-glyceraldehyde 3-phosphate-binding site is contributed by Arg166. D-ribose 5-phosphate-binding positions include Gly215 and 236-237 (GS).

This sequence belongs to the PdxS/SNZ family. In terms of assembly, in the presence of PdxT, forms a dodecamer of heterodimers.

The catalysed reaction is aldehydo-D-ribose 5-phosphate + D-glyceraldehyde 3-phosphate + L-glutamine = pyridoxal 5'-phosphate + L-glutamate + phosphate + 3 H2O + H(+). It participates in cofactor biosynthesis; pyridoxal 5'-phosphate biosynthesis. Catalyzes the formation of pyridoxal 5'-phosphate from ribose 5-phosphate (RBP), glyceraldehyde 3-phosphate (G3P) and ammonia. The ammonia is provided by the PdxT subunit. Can also use ribulose 5-phosphate and dihydroxyacetone phosphate as substrates, resulting from enzyme-catalyzed isomerization of RBP and G3P, respectively. The sequence is that of Pyridoxal 5'-phosphate synthase subunit PdxS from Bacillus cereus (strain 03BB102).